A 935-amino-acid chain; its full sequence is Isoleucine--tRNA ligase (935 aa).

Residues 58-68 (PYANGSIHVGH) carry the 'HIGH' region motif. Glu-558 is a binding site for L-isoleucyl-5'-AMP. The 'KMSKS' region motif lies at 599-603 (KMSKS). Lys-602 serves as a coordination point for ATP. Zn(2+) contacts are provided by Cys-897, Cys-900, Cys-917, and Cys-920.

This sequence belongs to the class-I aminoacyl-tRNA synthetase family. IleS type 1 subfamily. Monomer. Zn(2+) serves as cofactor.

It is found in the cytoplasm. It carries out the reaction tRNA(Ile) + L-isoleucine + ATP = L-isoleucyl-tRNA(Ile) + AMP + diphosphate. Catalyzes the attachment of isoleucine to tRNA(Ile). As IleRS can inadvertently accommodate and process structurally similar amino acids such as valine, to avoid such errors it has two additional distinct tRNA(Ile)-dependent editing activities. One activity is designated as 'pretransfer' editing and involves the hydrolysis of activated Val-AMP. The other activity is designated 'posttransfer' editing and involves deacylation of mischarged Val-tRNA(Ile). In Francisella tularensis subsp. mediasiatica (strain FSC147), this protein is Isoleucine--tRNA ligase.